The chain runs to 513 residues: Probable cytosol aminopeptidase (513 aa).

Mn(2+)-binding residues include lysine 277 and aspartate 282. The active site involves lysine 289. Mn(2+) is bound by residues aspartate 300, aspartate 359, and glutamate 361. Arginine 363 is a catalytic residue.

This sequence belongs to the peptidase M17 family. Requires Mn(2+) as cofactor.

It is found in the cytoplasm. The enzyme catalyses Release of an N-terminal amino acid, Xaa-|-Yaa-, in which Xaa is preferably Leu, but may be other amino acids including Pro although not Arg or Lys, and Yaa may be Pro. Amino acid amides and methyl esters are also readily hydrolyzed, but rates on arylamides are exceedingly low.. The catalysed reaction is Release of an N-terminal amino acid, preferentially leucine, but not glutamic or aspartic acids.. Presumably involved in the processing and regular turnover of intracellular proteins. Catalyzes the removal of unsubstituted N-terminal amino acids from various peptides. The chain is Probable cytosol aminopeptidase from Mycobacterium sp. (strain KMS).